The following is a 169-amino-acid chain: Small ribosomal subunit protein uS5 (169 aa).

The region spanning 15 to 79 is the S5 DRBM domain; the sequence is LKDQVVAINR…ESAKKNLVKV (65 aa).

It belongs to the universal ribosomal protein uS5 family. In terms of assembly, part of the 30S ribosomal subunit. Contacts proteins S4 and S8.

Its function is as follows. With S4 and S12 plays an important role in translational accuracy. In terms of biological role, located at the back of the 30S subunit body where it stabilizes the conformation of the head with respect to the body. The polypeptide is Small ribosomal subunit protein uS5 (Koribacter versatilis (strain Ellin345)).